Reading from the N-terminus, the 218-residue chain is MSDEPKGAILQRDKLTYAIVPRTPCGLLTPDVLDAVSRVCRKYEVPIIKITSGQRLALVGMKKEAVEPMWEELRLDVGRAVELCVHYVQACPGTAVCRFGLQDSLGIGVAIEEEYVGHDFPAKVKFGISGCPFCCGESYLRDVGLVGTKKGWTLIVGGNSGGHPRIGDVLAEELSTDEAKGLIRKFMEFYRDNSGKRLRVSKFVEKTGIEAIRQAVLG.

[4Fe-4S] cluster is bound by residues cysteine 91, cysteine 97, cysteine 131, and cysteine 135. Cysteine 135 is a binding site for siroheme.

Functionally, this enzyme catalyzes the 6-electron reduction of sulfite to sulfide. This is one of several activities required for the biosynthesis of L-cysteine from sulfate. This Nitratidesulfovibrio vulgaris (strain ATCC 29579 / DSM 644 / CCUG 34227 / NCIMB 8303 / VKM B-1760 / Hildenborough) (Desulfovibrio vulgaris) protein is Sulfite reductase, assimilatory-type.